Consider the following 163-residue polypeptide: Nucleotide-binding protein YajQ (163 aa).

It belongs to the YajQ family.

Its function is as follows. Nucleotide-binding protein. The sequence is that of Nucleotide-binding protein YajQ from Escherichia coli O127:H6 (strain E2348/69 / EPEC).